Here is a 295-residue protein sequence, read N- to C-terminus: 3-hydroxy-5-phosphonooxypentane-2,4-dione thiolase (295 aa).

Catalysis depends on Lys203, which acts as the Schiff-base intermediate with substrate.

Belongs to the DeoC/FbaB aldolase family. Homodecamer.

The protein resides in the cytoplasm. The enzyme catalyses dihydroxyacetone phosphate + acetyl-CoA = 3-hydroxy-2,4-dioxopentyl phosphate + CoA. Functionally, involved in the degradation of phospho-AI-2, thereby terminating induction of the lsr operon and closing the AI-2 signaling cycle. Catalyzes the transfer of an acetyl moiety from 3-hydroxy-5-phosphonooxypentane-2,4-dione to CoA to form glycerone phosphate and acetyl-CoA. The protein is 3-hydroxy-5-phosphonooxypentane-2,4-dione thiolase of Enterobacter sp. (strain 638).